The chain runs to 123 residues: Large ribosomal subunit protein bL20 (123 aa).

Belongs to the bacterial ribosomal protein bL20 family.

Functionally, binds directly to 23S ribosomal RNA and is necessary for the in vitro assembly process of the 50S ribosomal subunit. It is not involved in the protein synthesizing functions of that subunit. This Ehrlichia ruminantium (strain Gardel) protein is Large ribosomal subunit protein bL20.